The sequence spans 516 residues: MSCRNFQLSPRCGNRSFSSCSAIMPRMVTHYEVSKAPCRSGGGGGLRALGCLGSRSLCNVGFGRPRVASRCGMPGFGYRAGATCGSSACITPVTINESLLVPLELEIDPTVQRVKRDEKEQIKCLNNRFASFINKVRFLEQKNKLLETKWNFMQQQRSCQSNMEPLFEGYICALRRQLDCVSGDHGRLEAELCSLQEALEGYKKKYEEELSLRPCAENEFVTLKKDVDTAFLVKADLETNLEALEHEIEFLKALFEEEIGLLQSQISETSVIVKMDNSRELDVDGIVAEIKAQYDDIASRSKAEAEAWYQCRYEELRLTAGNHCDNLRNRKNEILEMNKLIQRLQQDIEAVKGQRCKLEGAIAQAEQQGEAALTDAKCKLAGLEEALQKAKQDMACLLKQYQEVMNCKLGLDIEIATYRRLLEGEEHRLCEGIGPVNISVSSSKGAVLYEPCVMGTPMLRTEYCTGTTGVLRNSGGCNVVGTGELYIPCEPQGLLGCGNGRSSSMKVGVGSNSCSR.

Residues 1-118 (MSCRNFQLSP…PTVQRVKRDE (118 aa)) are head. The IF rod domain maps to 118-429 (EKEQIKCLNN…RLLEGEEHRL (312 aa)). The interval 119-153 (KEQIKCLNNRFASFINKVRFLEQKNKLLETKWNFM) is coil 1A. Residues 154 to 163 (QQQRSCQSNM) form a linker 1 region. Residues 164–264 (EPLFEGYICA…FEEEIGLLQS (101 aa)) are coil 1B. The tract at residues 265-281 (QISETSVIVKMDNSREL) is linker 12. The interval 282-425 (DVDGIVAEIK…ATYRRLLEGE (144 aa)) is coil 2. A tail region spans residues 426 to 516 (EHRLCEGIGP…VGVGSNSCSR (91 aa)).

This sequence belongs to the intermediate filament family. In terms of assembly, heterotetramer of two type I and two type II keratins.

The protein is Keratin, type II cuticular Hb2 (Krt82) of Mus musculus (Mouse).